Consider the following 290-residue polypeptide: Ciliary microtubule inner protein 6 (290 aa).

The disordered stretch occupies residues 76–112; that stretch reads ENQGDWWPHGKGLENPFQPPYDTKSTQRSDFKKPTCP. 2 mn regions span residues 128–160 and 213–246; these read GIVP…ARKT and SAES…IRVA. Residues 197-228 form a disordered region; sequence SGSCSSEQSKKTEKGNSAESKMISPGLCRQNS.

It localises to the cell projection. It is found in the cilium. The chain is Ciliary microtubule inner protein 6 (CIMIP6) from Bos taurus (Bovine).